Consider the following 347-residue polypeptide: Protein RecA (347 aa).

66 to 73 provides a ligand contact to ATP; sequence GPESSGKT.

The protein belongs to the RecA family.

It is found in the cytoplasm. In terms of biological role, can catalyze the hydrolysis of ATP in the presence of single-stranded DNA, the ATP-dependent uptake of single-stranded DNA by duplex DNA, and the ATP-dependent hybridization of homologous single-stranded DNAs. It interacts with LexA causing its activation and leading to its autocatalytic cleavage. This Burkholderia cepacia (Pseudomonas cepacia) protein is Protein RecA.